Here is a 147-residue protein sequence, read N- to C-terminus: Ribonuclease 4 (147 aa).

Positions 1–28 (MALQRTHSLLLLLLLTLLGLGLVQPSYG) are cleaved as a signal peptide. Pyrrolidone carboxylic acid is present on Q29. Residues R35, H40, K68, N71, and T72 each contribute to the dUMP site. H40 functions as the Proton acceptor in the catalytic mechanism. 4 disulfides stabilise this stretch: C53/C109, C67/C120, C85/C135, and C92/C99. The active-site Proton donor is H144. A dUMP-binding site is contributed by F145.

It belongs to the pancreatic ribonuclease family.

The protein localises to the secreted. In terms of biological role, cleaves preferentially after uridine bases. Has antimicrobial activity against uropathogenic E.coli (UPEC). Probably contributes to urinary tract sterility. This Pan troglodytes (Chimpanzee) protein is Ribonuclease 4 (RNASE4).